The sequence spans 207 residues: Ribosomal RNA large subunit methyltransferase E (207 aa).

Residues Gly-51, Trp-53, Asp-69, Asp-85, and Asp-108 each coordinate S-adenosyl-L-methionine. Lys-148 functions as the Proton acceptor in the catalytic mechanism.

This sequence belongs to the class I-like SAM-binding methyltransferase superfamily. RNA methyltransferase RlmE family.

It localises to the cytoplasm. It catalyses the reaction uridine(2552) in 23S rRNA + S-adenosyl-L-methionine = 2'-O-methyluridine(2552) in 23S rRNA + S-adenosyl-L-homocysteine + H(+). Functionally, specifically methylates the uridine in position 2552 of 23S rRNA at the 2'-O position of the ribose in the fully assembled 50S ribosomal subunit. In Methanospirillum hungatei JF-1 (strain ATCC 27890 / DSM 864 / NBRC 100397 / JF-1), this protein is Ribosomal RNA large subunit methyltransferase E.